Here is a 332-residue protein sequence, read N- to C-terminus: Iron-utilization periplasmic protein (332 aa).

Residues 1-23 form the signal peptide; sequence MQFKHFKLATLAAALAFSANSFA. Positions 32, 80, 218, and 219 each coordinate Fe cation.

This sequence belongs to the bacterial solute-binding protein 1 family. The complex is composed of two ATP-binding proteins (FbpC), two transmembrane proteins (FbpB) and a solute-binding protein (FbpA).

The protein localises to the periplasm. Part of the ABC transporter complex FbpABC (TC 3.A.1.10.1) involved in Fe(3+) ions import. This protein specifically binds Fe(3+) and is involved in its transmembrane transport. The sequence is that of Iron-utilization periplasmic protein (fbpA) from Haemophilus influenzae (strain ATCC 51907 / DSM 11121 / KW20 / Rd).